Consider the following 684-residue polypeptide: Glycine--tRNA ligase beta subunit (684 aa).

This sequence belongs to the class-II aminoacyl-tRNA synthetase family. Tetramer of two alpha and two beta subunits.

It localises to the cytoplasm. The catalysed reaction is tRNA(Gly) + glycine + ATP = glycyl-tRNA(Gly) + AMP + diphosphate. This is Glycine--tRNA ligase beta subunit from Pseudomonas aeruginosa (strain ATCC 15692 / DSM 22644 / CIP 104116 / JCM 14847 / LMG 12228 / 1C / PRS 101 / PAO1).